The following is a 208-amino-acid chain: Cysteine-rich protein 2 (208 aa).

One can recognise an LIM zinc-binding 1 domain in the interval 5 to 57 (CPKCDKTVCFAEKVSSLGKDWHKFCLKCERCSKTLTPGGHAEHDGKPFCHKPC). K23 carries the post-translational modification N6-acetyllysine. The disordered stretch occupies residues 98 to 119 (AEERKASGPPKGPSRASSVTTF). S104 carries the phosphoserine modification. Residues 126-178 (CPRCSKKVYFAEKVTSLGKDWHRPCLHCERCGKTLTPGGHAEHDGQPYCHKPC) enclose the LIM zinc-binding 2 domain. 2 positions are modified to N6-acetyllysine: K138 and K144.

In terms of assembly, interacts with TGFB1I1.

The protein is Cysteine-rich protein 2 (CRIP2) of Pongo abelii (Sumatran orangutan).